Here is a 398-residue protein sequence, read N- to C-terminus: tRNA(Ile)-lysidine synthase (398 aa).

25–30 (SGGVDS) contacts ATP.

This sequence belongs to the tRNA(Ile)-lysidine synthase family.

The protein localises to the cytoplasm. The enzyme catalyses cytidine(34) in tRNA(Ile2) + L-lysine + ATP = lysidine(34) in tRNA(Ile2) + AMP + diphosphate + H(+). Functionally, ligates lysine onto the cytidine present at position 34 of the AUA codon-specific tRNA(Ile) that contains the anticodon CAU, in an ATP-dependent manner. Cytidine is converted to lysidine, thus changing the amino acid specificity of the tRNA from methionine to isoleucine. This Francisella tularensis subsp. tularensis (strain SCHU S4 / Schu 4) protein is tRNA(Ile)-lysidine synthase.